The following is a 359-amino-acid chain: UbiA prenyltransferase domain-containing protein 1 homolog (359 aa).

Positions 1-16 (MATSSQLLPNGNLSRN) are enriched in polar residues. Residues 1-23 (MATSSQLLPNGNLSRNGKTKTED) form a disordered region. The next 8 helical transmembrane spans lie at 67–89 (ALRPWSLSASLVPTLLGSALAYR), 98–118 (LATFFLTAFTVVTVHCAGNVV), 148–168 (VVSLGAILYMAGCGGFVLLAV), 177–197 (LALIYFGGLSSSFLYTGGIGF), 200–220 (IALGDLVILILFGPISVLFAF), 262–284 (IVTLAILIGRTASHVLYAMLLFA), 289–311 (FFIFGLKYSLWFLLPLVTLPQAF), and 335–355 (FFFGILYVVACCCAHQLPTFG).

The protein belongs to the UbiA prenyltransferase family.

Its subcellular location is the mitochondrion membrane. Its pathway is quinol/quinone metabolism; menaquinone biosynthesis. Its function is as follows. Prenyltransferase that mediates the formation of menaquinone-4 (MK-4), a vitamin K2 isoform, thereby acting as a mitochondrial electron carrier. Mediates the conversion of phylloquinone (PK) into MK-4, probably by cleaving the side chain of phylloquinone (PK) to release 2-methyl-1,4-naphthoquinone (menadione; K3) and then prenylating it with geranylgeranyl pyrophosphate (GGPP) to form MK-4. MK-4 acts as a membrane electron carrier downstream of a electron transport chain complex, improving mitochondrial oxygen consumption. The protein is UbiA prenyltransferase domain-containing protein 1 homolog (heix) of Drosophila melanogaster (Fruit fly).